We begin with the raw amino-acid sequence, 176 residues long: N,N-dimethyl phenylurea N-demethylase subunit beta (176 aa).

The protein belongs to the bacterial ring-hydroxylating dioxygenase beta subunit family. In terms of assembly, pdmA (subunit alpha) and PdmB (subunit beta) form the oxygenase component of a bacterial Rieske non-heme iron oxygenase (RO) system.

The enzyme catalyses a 1,1-dimethyl-3-phenylurea + 2 reduced [2Fe-2S]-[ferredoxin] + O2 + 2 H(+) = a 1-methyl-3-phenylurea + formaldehyde + 2 oxidized [2Fe-2S]-[ferredoxin] + H2O. The catalysed reaction is isoproturon + 2 reduced [2Fe-2S]-[ferredoxin] + O2 + 2 H(+) = 1-methyl-3-[4-(propan-2-yl)phenyl]urea + formaldehyde + 2 oxidized [2Fe-2S]-[ferredoxin] + H2O. It catalyses the reaction chlorotoluron + 2 reduced [2Fe-2S]-[ferredoxin] + O2 + 2 H(+) = 3-(3-chloro-4-methylphenyl)-1-methylurea + formaldehyde + 2 oxidized [2Fe-2S]-[ferredoxin] + H2O. It carries out the reaction metoxuron + 2 reduced [2Fe-2S]-[ferredoxin] + O2 + 2 H(+) = 3-(3-chloro-4-methoxylphenyl)-1-methylurea + formaldehyde + 2 oxidized [2Fe-2S]-[ferredoxin] + H2O. The enzyme catalyses monuron + 2 reduced [2Fe-2S]-[ferredoxin] + O2 + 2 H(+) = 3-(4-chlorophenyl)-1-methylurea + formaldehyde + 2 oxidized [2Fe-2S]-[ferredoxin] + H2O. The catalysed reaction is diuron + 2 reduced [2Fe-2S]-[ferredoxin] + O2 + 2 H(+) = 3-(3,4-dichlorophenyl)-1-methylurea + formaldehyde + 2 oxidized [2Fe-2S]-[ferredoxin] + H2O. It catalyses the reaction fluometuron + 2 reduced [2Fe-2S]-[ferredoxin] + O2 + 2 H(+) = 3-[3-(trifluoromethyl)phenyl]-1-methylurea + formaldehyde + 2 oxidized [2Fe-2S]-[ferredoxin] + H2O. It carries out the reaction fenuron + 2 reduced [2Fe-2S]-[ferredoxin] + O2 + 2 H(+) = 1-methyl-3-phenylurea + formaldehyde + 2 oxidized [2Fe-2S]-[ferredoxin] + H2O. Its pathway is xenobiotic degradation. Its activity is regulated as follows. Activity is stimulated in vitro by coexpression of a [3Fe-4S]-type ferredoxin. Functionally, part of the multicomponent N,N-dimethyl phenylurea N-demethylase responsible for the initial N-demethylation step during the bacterial metabolism of N,N-dimethyl-substituted phenylurea herbicides. Catalyzes the mono-N-demethylation of N,N-dimethyl-substituted phenylurea herbicides to their mono-N-demethylated derivatives. Is active on isoproturon (IPU), chlorotoluron, metoxuron, monoron, diuron, fluometuron and fenuron, but cannot transform the N-methoxy-N-methyl-substituted herbicides. The sequence is that of N,N-dimethyl phenylurea N-demethylase subunit beta from Sphingobium sp. (strain YBL2).